The primary structure comprises 605 residues: Apoptosis-inducing factor 3 (605 aa).

Residues 22 to 45 (KERGKEELSASGKGSPRAYQGNGT) are disordered. In terms of domain architecture, Rieske spans 70-165 (AAVCHVKDLE…VKIEKEKVYV (96 aa)). Residues Cys109, His111, Cys128, and His131 each coordinate [2Fe-2S] cluster. FAD contacts are provided by residues 201–205 (GAGAA), Arg235, Lys240, Val270, Asp467, and Trp514.

The protein belongs to the FAD-dependent oxidoreductase family. In terms of tissue distribution, ubiquitous. Expressed in bone marrow, cerebral cortex, liver, ovary, thymus, thyroid gland and tongue (at protein level).

The protein localises to the mitochondrion. Functionally, induces apoptosis through a caspase dependent pathway. Reduces mitochondrial membrane potential. This is Apoptosis-inducing factor 3 (AIFM3) from Homo sapiens (Human).